We begin with the raw amino-acid sequence, 847 residues long: MSRYDPAATESRWQAAWDAAGVFTARHDPARPKYYVLEMFPYPSGRIHMGHVRNYTMGDVVARQKAAAGFSVLHPMGWDAFGMPAENAAMERGGHPKDWTYGNIADMRAQMKPLGLSIDWSREFATCDPEYYGQQQAMFIDMMEAGLVYRKNAVVNWDPVDMTVLANEQVIDGKGWRSGAPVVRRELTQWFFRISDYAGELLEALDTLKDWPEKVRLMQANWIGQSRGLQFAFSTAGAPEGFDRLEVYTTRPDTLMGASFAAISPDHPLARHLERHDAEVAEFVAECRRVGTSEEALEKAEKKGFDTGLRVRHPFDTAWELPVYIANFILMDYGTGAIFGCPAHDQRDFEFATKYGLPIRPVFLPEGTEETALAEAFVPMKSERVHYIRGFAGAEVQSGEEGVAAAIDFCESQGVGRGVTNYRLRDWGISRQRYWGCPIPVIHCETCGVVPEAKENLPVRLPDDVSFDVPGNPLDRHPTWRDCTCPKCGAKARRETDTMDTFVDSSWYYARFTAPRAATPTDAEEADYWMNVDQYIGGIEHAILHLLYSRFFARAMQKTGHLPAKAIEPFNALFTQGMVTHEIYLTRDAAGRPVYHLPEDVTDGKLADGTPVEIIPSAKMSKSKKNVVDPMNIIRQFGADTARWFVMSDSPPERDVEWTASGAEAASKHLHRVWRLADEISRADGEANAEDGALDKATARAIAEVTQGVEGFAFNKAIAKLYEFTNTLSRSGAGAEAKKRAMRTMAQLMSPMVPHLAEEVWAMLGGEGLVAQAAWPKADPALLIDDTVTLPIQVNGKRRGEITVPKEMAASEVEKLVLADEAVQRALGGAAPKKLIVVPGRIVNVVI.

The short motif at 41–51 (PYPSGRIHMGH) is the 'HIGH' region element. A 'KMSKS' region motif is present at residues 619–623 (KMSKS). K622 is a binding site for ATP.

Belongs to the class-I aminoacyl-tRNA synthetase family.

It localises to the cytoplasm. It catalyses the reaction tRNA(Leu) + L-leucine + ATP = L-leucyl-tRNA(Leu) + AMP + diphosphate. The sequence is that of Leucine--tRNA ligase from Cereibacter sphaeroides (strain KD131 / KCTC 12085) (Rhodobacter sphaeroides).